Reading from the N-terminus, the 386-residue chain is Succinate--CoA ligase [ADP-forming] subunit beta (386 aa).

The 236-residue stretch at K9–E244 folds into the ATP-grasp domain. ATP is bound by residues K46, G53–G55, E99, C102, and E107. Mg(2+)-binding residues include N199 and D213. Substrate contacts are provided by residues N264 and G321–M323.

This sequence belongs to the succinate/malate CoA ligase beta subunit family. Heterotetramer of two alpha and two beta subunits. Mg(2+) is required as a cofactor.

The enzyme catalyses succinate + ATP + CoA = succinyl-CoA + ADP + phosphate. It carries out the reaction GTP + succinate + CoA = succinyl-CoA + GDP + phosphate. It functions in the pathway carbohydrate metabolism; tricarboxylic acid cycle; succinate from succinyl-CoA (ligase route): step 1/1. Functionally, succinyl-CoA synthetase functions in the citric acid cycle (TCA), coupling the hydrolysis of succinyl-CoA to the synthesis of either ATP or GTP and thus represents the only step of substrate-level phosphorylation in the TCA. The beta subunit provides nucleotide specificity of the enzyme and binds the substrate succinate, while the binding sites for coenzyme A and phosphate are found in the alpha subunit. The polypeptide is Succinate--CoA ligase [ADP-forming] subunit beta (Bacillus anthracis (strain A0248)).